A 185-amino-acid polypeptide reads, in one-letter code: Guanosine deaminase (185 aa).

The CMP/dCMP-type deaminase domain occupies D28–F142. Position 80 (H80) interacts with Zn(2+). E82 acts as the Proton donor in catalysis. Zn(2+) contacts are provided by C110 and C113.

The protein belongs to the cytidine and deoxycytidylate deaminase family. As to expression, expressed in roots, leaves, flowers and siliques.

The protein resides in the cytoplasm. The protein localises to the nucleus. It catalyses the reaction guanosine + H2O + H(+) = xanthosine + NH4(+). Functionally, catalyzes the hydrolytic deamination of guanosine, producing xanthosine and ammonia. Deaminates exclusively guanosine and 2'-deoxyguanosine but no other aminated purines, pyrimidines, or pterines. Deamination of guanosine by GSDA is the only source of xanthosine production in Arabidopsis. The protein is Guanosine deaminase of Arabidopsis thaliana (Mouse-ear cress).